An 899-amino-acid chain; its full sequence is Alanine--tRNA ligase, chloroplastic/mitochondrial (899 aa).

His581, His585, Cys683, and His687 together coordinate Zn(2+).

Belongs to the class-II aminoacyl-tRNA synthetase family. In terms of assembly, monomer. The cofactor is Zn(2+).

It localises to the plastid. The protein resides in the chloroplast. The protein localises to the mitochondrion. It carries out the reaction tRNA(Ala) + L-alanine + ATP = L-alanyl-tRNA(Ala) + AMP + diphosphate. Catalyzes the attachment of alanine to tRNA(Ala) in a two-step reaction: alanine is first activated by ATP to form Ala-AMP and then transferred to the acceptor end of tRNA(Ala). Also edits incorrectly charged tRNA(Ala) via its editing domain. In Micromonas pusilla (strain CCMP1545) (Picoplanktonic green alga), this protein is Alanine--tRNA ligase, chloroplastic/mitochondrial.